Reading from the N-terminus, the 715-residue chain is Gelsolin, cytoplasmic (715 aa).

Residues 1 to 124 (MTTELEIQKA…YLIGGVASGF (124 aa)) form an actin-severing region. A Gelsolin-like 1 repeat occupies 24-75 (FELVPVPKTNHGKFYTGDSYIILKTTALESGRGFEWNLHYWQGKESSQDERG). Residues 72-75 (DERG) are actin-actin interfilament contact point. Residue 136–145 (KVLTRVKGKR) participates in a 1,2-diacyl-sn-glycero-3-phospho-(1D-myo-inositol-4,5-bisphosphate) binding. Gelsolin-like repeat units follow at residues 147–187 (VRAT…FEKN), 260–306 (LKIT…TERA), and 405–451 (LRKE…NERT). Positions 384–715 (AAESKMIDDG…FLGWDKTLWD (332 aa)) are actin-binding, Ca-sensitive. 9 residues coordinate Ca(2+): Gly-421, Asp-422, Glu-449, Thr-499, Asn-539, Asp-540, Glu-562, Asp-642, and Glu-665. Gelsolin-like repeat units lie at residues 524 to 564 (CRAV…SEIQ) and 625 to 667 (FIAE…EEKM).

Belongs to the villin/gelsolin family. In terms of tissue distribution, predominantly in the body wall muscle, but expression is not restricted to muscle cells.

The protein localises to the cytoplasm. It is found in the cytoskeleton. Calcium-regulated, actin-modulating protein that binds to the plus (or barbed) ends of actin monomers or filaments, preventing monomer exchange (end-blocking or capping). It can promote the assembly of monomers into filaments (nucleation) as well as sever filaments already formed. In Halocynthia roretzi (Sea squirt), this protein is Gelsolin, cytoplasmic.